The following is a 278-amino-acid chain: Formamidopyrimidine-DNA glycosylase (278 aa).

Pro2 serves as the catalytic Schiff-base intermediate with DNA. Catalysis depends on Glu3, which acts as the Proton donor. Lys57 (proton donor; for beta-elimination activity) is an active-site residue. 3 residues coordinate DNA: His90, Arg109, and Lys150. An FPG-type zinc finger spans residues Gln235–Phe269. Arg259 serves as the catalytic Proton donor; for delta-elimination activity.

Belongs to the FPG family. In terms of assembly, monomer. Zn(2+) is required as a cofactor.

The catalysed reaction is Hydrolysis of DNA containing ring-opened 7-methylguanine residues, releasing 2,6-diamino-4-hydroxy-5-(N-methyl)formamidopyrimidine.. It catalyses the reaction 2'-deoxyribonucleotide-(2'-deoxyribose 5'-phosphate)-2'-deoxyribonucleotide-DNA = a 3'-end 2'-deoxyribonucleotide-(2,3-dehydro-2,3-deoxyribose 5'-phosphate)-DNA + a 5'-end 5'-phospho-2'-deoxyribonucleoside-DNA + H(+). In terms of biological role, involved in base excision repair of DNA damaged by oxidation or by mutagenic agents. Acts as a DNA glycosylase that recognizes and removes damaged bases. Has a preference for oxidized purines, such as 7,8-dihydro-8-oxoguanine (8-oxoG). Has AP (apurinic/apyrimidinic) lyase activity and introduces nicks in the DNA strand. Cleaves the DNA backbone by beta-delta elimination to generate a single-strand break at the site of the removed base with both 3'- and 5'-phosphates. This Yersinia pestis (strain Pestoides F) protein is Formamidopyrimidine-DNA glycosylase.